The chain runs to 188 residues: UPF0301 protein CPn_0139/CP_0633/CPj0139/CpB0140 (188 aa).

It belongs to the UPF0301 (AlgH) family.

The protein is UPF0301 protein CPn_0139/CP_0633/CPj0139/CpB0140 of Chlamydia pneumoniae (Chlamydophila pneumoniae).